The following is a 240-amino-acid chain: DNA repair protein RecO (240 aa).

Belongs to the RecO family.

In terms of biological role, involved in DNA repair and RecF pathway recombination. This is DNA repair protein RecO from Xanthomonas euvesicatoria pv. vesicatoria (strain 85-10) (Xanthomonas campestris pv. vesicatoria).